A 251-amino-acid polypeptide reads, in one-letter code: Small ribosomal subunit protein uS2 (251 aa).

The protein belongs to the universal ribosomal protein uS2 family.

The sequence is that of Small ribosomal subunit protein uS2 from Azoarcus sp. (strain BH72).